An 805-amino-acid chain; its full sequence is MAERVLTRVHSLRERLDATLAAHRNEILLFLSRIESHGKGILKPHQLLAEFESIHKEDKDKLNDHAFEEVLKSTQEAIVLPPWVALAIRLRPGVWEYVRVNVNALIVEELTVPEFLQFKEELVNGTSNDNFVLELDFEPFTASFPKPTLTKSIGNGVEFLNRHLSAKMFHDKESMTPLLEFLRVHHYKGKTMMLNDRIQNLYTLQKVLRKAEEYLTTLSPETSYSAFEHKFQEIGLERGWGDTAERVLEMICMLLDLLEAPDSCTLEKFLGRIPMVFNVVILSPHGYFAQENVLGYPDTGGQVVYILDQVPALEREMLKRIKEQGLDIKPRILIVTRLLPDAVGTTCGQRLEKVFGTEHSHILRVPFRTEKGIVRKWISRFEVWPYMETFIEDVGKEITAELQAKPDLIIGNYSEGNLAASLLAHKLGVTQCTIAHALEKTKYPDSDIYLNKFDEKYHFSAQFTADLIAMNHTDFIITSTFQEIAGSKDTVGQYESHMAFTMPGLYRVVHGIDVFDPKFNIVSPGADVNLYFPYSEKEKRLTTFHPEIEDLLFSDVENEEHLCVLKDRNKPIIFTMARLDRVKNLTGLVEWYAKNPRLRELVNLVVVGGDRRKESKDLEEQAEMKKMYELIKTHNLNGQFRWISSQMNRVRNGELYRYIADTRGAFVQPAFYEAFGLTVVEAMSCGLPTFATNQGGPAEIIVHGKSGFQIDPYHGEQAADLLADFFEKCKVDPSHWEAISEGGLKRIQEKYTWQIYSDRLLTLAAVYGFWKHVSKLDRLEIRRYLEMFYALKFRKLAQLVPLAVE.

The GT-B glycosyltransferase stretch occupies residues 275-752 (MVFNVVILSP…GLKRIQEKYT (478 aa)).

Belongs to the glycosyltransferase 1 family. Plant sucrose synthase subfamily.

The enzyme catalyses an NDP-alpha-D-glucose + D-fructose = a ribonucleoside 5'-diphosphate + sucrose + H(+). Its function is as follows. Sucrose-cleaving enzyme that provides UDP-glucose and fructose for various metabolic pathways. The sequence is that of Sucrose synthase from Solanum tuberosum (Potato).